The sequence spans 281 residues: Translation initiation factor IF3-4, chloroplastic (281 aa).

Residues 1–51 (MAGITSTVGFNAILAGATKTVSHPVKSKLFGLRLCVPEFSIVSLSPYHHRR) constitute a chloroplast transit peptide. Disordered regions lie at residues 63–86 (GGGG…DDSL) and 253–281 (KVQE…TQDI). 2 stretches are compositionally biased toward basic and acidic residues: residues 70-79 (PGDRRGRQKE) and 253-270 (KVQE…DDKV).

The protein belongs to the IF-3 family. Monomer.

Its subcellular location is the plastid. It is found in the chloroplast. In terms of biological role, chloroplast translation initiation factor that is essential for the coordination of leaf and chloroplast development. IF-3 binds to the 30S ribosomal subunit and shifts the equilibrium between 70S ribosomes and their 50S and 30S subunits in favor of the free subunits, thus enhancing the availability of 30S subunits on which protein synthesis initiation begins. The polypeptide is Translation initiation factor IF3-4, chloroplastic (Arabidopsis thaliana (Mouse-ear cress)).